The following is a 983-amino-acid chain: Inner tegument protein (983 aa).

Residues 474-983 (LNVNTHFAVQ…TSVSLPPASP (510 aa)) are interaction with large tegument protein. Residues 901-932 (APWESAPQPPRLRMTPDTDHEESTAGATSVPE) are disordered. Over residues 914–923 (MTPDTDHEES) the composition is skewed to basic and acidic residues.

This sequence belongs to the herpesviridae inner tegument protein family. As to quaternary structure, interacts (via C-terminus) with the large tegument protein/LTP (via N-terminus).

It is found in the virion tegument. The protein resides in the host cytoplasm. It localises to the host nucleus. Its subcellular location is the host Golgi apparatus. The protein localises to the host trans-Golgi network. Functionally, plays an essential role in cytoplasmic secondary envelopment during viral egress. Interacts with the capsid via the large tegument protein/LTP and participates in its transport to the host trans-Golgi network (TGN) where secondary envelopment occurs. Modulates tegumentation and capsid accumulation at the viral assembly complex. The sequence is that of Inner tegument protein (UL47) from Homo sapiens (Human).